The sequence spans 144 residues: Histone H2B.2, sperm (144 aa).

The disordered stretch occupies residues 1-51; it reads MPRSPAKTSPRKGSPRKGSPSRKASPKRGGKGAKRAGKGGRRRRVVKRRRR. 5 consecutive short sequence motifs (SPKK motif) follow at residues 4-7, 9-12, 14-17, 19-22, and 25-28; these read SPAK, SPRK, SPSR, and SPKR. Phosphoserine is present on residues S14, S19, and S25. A compositionally biased stretch (basic residues) spans 24–51; sequence ASPKRGGKGAKRAGKGGRRRRVVKRRRR. O-linked (GlcNAc) serine glycosylation is present at S131. K139 participates in a covalent cross-link: Glycyl lysine isopeptide (Lys-Gly) (interchain with G-Cter in ubiquitin).

This sequence belongs to the histone H2B family. In terms of assembly, the nucleosome is a histone octamer containing two molecules each of H2A, H2B, H3 and H4 assembled in one H3-H4 heterotetramer and two H2A-H2B heterodimers. The octamer wraps approximately 147 bp of DNA. In terms of processing, monoubiquitination of Lys-139 gives a specific tag for epigenetic transcriptional activation and is also prerequisite for histone H3 'Lys-4' and 'Lys-79' methylation. Phosphorylated on SPKK motifs 3, 4 and 5; which may regulate DNA binding. Dephosphorylated during maturation of spermatids to mature sperm and rephosphorylated at fertilization.

Its subcellular location is the nucleus. It is found in the chromosome. Functionally, core component of nucleosome. Nucleosomes wrap and compact DNA into chromatin, limiting DNA accessibility to the cellular machineries which require DNA as a template. Histones thereby play a central role in transcription regulation, DNA repair, DNA replication and chromosomal stability. DNA accessibility is regulated via a complex set of post-translational modifications of histones, also called histone code, and nucleosome remodeling. This chain is Histone H2B.2, sperm, found in Parechinus angulosus (Angulate sea urchin).